A 150-amino-acid polypeptide reads, in one-letter code: Lymphotoxin-beta (150 aa).

In terms of domain architecture, THD spans 1–149 (AWITGQGLGW…GKTFFGAVMV (149 aa)). N-linked (GlcNAc...) asparagine glycosylation is present at Asn128.

This sequence belongs to the tumor necrosis factor family. Heterotrimer of either two LTB and one LTA subunits or (less prevalent) two LTA and one LTB subunits.

Its subcellular location is the membrane. Its function is as follows. Cytokine that binds to LTBR/TNFRSF3. May play a specific role in immune response regulation. Provides the membrane anchor for the attachment of the heterotrimeric complex to the cell surface. This is Lymphotoxin-beta (LTB) from Sus scrofa (Pig).